A 424-amino-acid polypeptide reads, in one-letter code: Envelope glycoprotein M (424 aa).

Residues 1–23 (MASRARMERNYRGLSHIDYVHKK) are Intravirion-facing. The chain crosses the membrane as a helical span at residues 24–44 (MWVVQAVCFGIAVLVFFGTLV). The Virion surface portion of the chain corresponds to 45 to 94 (AASINLTEGFPCFFAAVVDYRTVNTTLVHTGLTYPRLGGVVPVLFFQTKA). Residues 95–115 (VVFFFYATSIVFVFLVCYITV) form a helical membrane-spanning segment. The Intravirion segment spans residues 116 to 143 (GAIISSKKHVGAAYMGSGAFVFSLMASP). A helical membrane pass occupies residues 144 to 164 (LTILLGTVSIWLLQAVVIVLA). Over 165-166 (HK) the chain is Virion surface. A helical transmembrane segment spans residues 167–187 (LIVLAAAVYLVHFSTITFFYG). The Intravirion segment spans residues 188-226 (YFCGRGVDSKVYAEDISSAKDIDGSLHKLIGNVRAMMVN). Residues 227-247 (LLSIVYSIILIMSSLMFGMLL) form a helical membrane-spanning segment. Topologically, residues 248 to 261 (ANSFTLKFWHVIVT) are virion surface. A helical transmembrane segment spans residues 262–282 (VLITTSVLTLIYLLVIEFLIA). Position 283 (Arg-283) is a topological domain, intravirion. A helical membrane pass occupies residues 284-304 (YVHIILGAYIGLLIGYGMLWT). Residues 305–327 (TTCDYVNRFYYAMGANASNLRIA) lie on the Virion surface side of the membrane. Residues 328–348 (CHSVLAVFTVLILLAMVVRLI) form a helical membrane-spanning segment. Residues 349-424 (RASLYHRRRS…YSGSESEWDD (76 aa)) lie on the Intravirion side of the membrane. The segment at 382–424 (SYKQRGSQSEDERALTQSRSAEASDEDTIYDRVYSGSESEWDD) is disordered.

The protein belongs to the herpesviridae glycoprotein M family. Interacts (via N-terminus) with gN (via N-terminus). The gM-gN heterodimer forms the gCII complex.

The protein localises to the virion membrane. It is found in the host Golgi apparatus. The protein resides in the host trans-Golgi network. It localises to the host endosome membrane. Its subcellular location is the host nucleus inner membrane. Its function is as follows. Envelope glycoprotein important for virion assembly and egress. Plays a role in the correct incorporation of gH-gL into virion membrane. Directs the glycoprotein N (gN) to the host trans-Golgi network. This chain is Envelope glycoprotein M, found in Gallid herpesvirus 2 (strain Chicken/Md5/ATCC VR-987) (GaHV-2).